Here is a 340-residue protein sequence, read N- to C-terminus: Lipopolysaccharide core biosynthesis glycosyltransferase LpsE (340 aa).

Belongs to the glycosyltransferase group 1 family. Glycosyltransferase 4 subfamily.

It participates in bacterial outer membrane biogenesis; LPS core biosynthesis. The polypeptide is Lipopolysaccharide core biosynthesis glycosyltransferase LpsE (lpsE) (Rhizobium meliloti (strain 1021) (Ensifer meliloti)).